Consider the following 1725-residue polypeptide: Latrophilin Cirl (1725 aa).

Residues methionine 1 to arginine 757 are Extracellular-facing. The SUEL-type lectin domain occupies alanine 18–isoleucine 107. Asparagine 135 is a glycosylation site (N-linked (GlcNAc...) asparagine). A disordered region spans residues alanine 164–glycine 284. Low complexity-rich tracts occupy residues proline 167–threonine 176 and serine 224–asparagine 236. N-linked (GlcNAc...) asparagine glycosylation is found at asparagine 236, asparagine 278, asparagine 326, asparagine 388, asparagine 645, asparagine 693, and asparagine 720. Residues leucine 259–asparagine 282 show a composition bias toward polar residues. Residues aspartate 361–serine 390 are disordered. A compositionally biased stretch (polar residues) spans alanine 371–serine 390. The region spanning arginine 551–histidine 744 is the GAIN-B domain. 2 disulfide bridges follow: cysteine 699/cysteine 726 and cysteine 714/cysteine 728. The interval cysteine 699–histidine 744 is GPS. A helical transmembrane segment spans residues isoleucine 758–leucine 778. Residues lysine 779–threonine 791 lie on the Cytoplasmic side of the membrane. A helical membrane pass occupies residues serine 792–isoleucine 812. Topologically, residues glutamate 813 to serine 818 are extracellular. A helical membrane pass occupies residues isoleucine 819 to phenylalanine 839. Residues cysteine 840 to valine 865 lie on the Cytoplasmic side of the membrane. Residues asparagine 866–isoleucine 886 form a helical membrane-spanning segment. The Extracellular portion of the chain corresponds to aspartate 887–phenylalanine 910. Residues valine 911–isoleucine 931 traverse the membrane as a helical segment. Over methionine 932 to serine 958 the chain is Cytoplasmic. A helical transmembrane segment spans residues phenylalanine 959–alanine 979. Over lysine 980 to alanine 986 the chain is Extracellular. The helical transmembrane segment at proline 987–phenylalanine 1007 threads the bilayer. Over histidine 1008–lysine 1725 the chain is Cytoplasmic. The tract at residues threonine 1056–glutamine 1088 is disordered. Serine 1153 bears the Phosphoserine mark. Disordered stretches follow at residues histidine 1236–arginine 1263, glutamine 1309–histidine 1337, glycine 1472–arginine 1555, and leucine 1636–histidine 1705. The span at asparagine 1237–glycine 1246 shows a compositional bias: basic residues. A phosphoserine mark is found at serine 1255 and serine 1262. Over residues glutamine 1309–leucine 1327 the composition is skewed to low complexity. Phosphoserine occurs at positions 1328 and 1329. The span at glycine 1478–lysine 1496 shows a compositional bias: low complexity. 2 stretches are compositionally biased toward acidic residues: residues aspartate 1505–threonine 1522 and cysteine 1532–aspartate 1543. The span at glutamine 1651–glutamine 1666 shows a compositional bias: polar residues. The span at serine 1667 to alanine 1683 shows a compositional bias: low complexity. The span at proline 1684 to threonine 1693 shows a compositional bias: basic residues. Residues glutamine 1694–histidine 1705 are compositionally biased toward low complexity.

This sequence belongs to the G-protein coupled receptor 2 family. LN-TM7 subfamily. As to quaternary structure, forms a heterodimer, consisting of a large extracellular region non-covalently linked to a seven-transmembrane moiety. Post-translationally, proteolytically cleaved into 2 subunits, an extracellular subunit and a seven-transmembrane subunit.

It is found in the cell membrane. The polypeptide is Latrophilin Cirl (Drosophila mojavensis (Fruit fly)).